A 365-amino-acid polypeptide reads, in one-letter code: Flagellar P-ring protein (365 aa).

An N-terminal signal peptide occupies residues 1–20 (MKLPHFFVLAALVLSGAAHA).

This sequence belongs to the FlgI family. The basal body constitutes a major portion of the flagellar organelle and consists of four rings (L,P,S, and M) mounted on a central rod.

It is found in the periplasm. Its subcellular location is the bacterial flagellum basal body. In terms of biological role, assembles around the rod to form the L-ring and probably protects the motor/basal body from shearing forces during rotation. This is Flagellar P-ring protein from Thiobacillus denitrificans (strain ATCC 25259 / T1).